Consider the following 461-residue polypeptide: Porin AaxA (461 aa).

Residues 1-22 (MSFRSVLLTALLSLSFTTTMQA) form the signal peptide.

This sequence belongs to the OprB family.

Its subcellular location is the cell outer membrane. In terms of biological role, facilitates L-arginine uptake, as part of the AaxABC system. The arginine uptake by the bacterium in the macrophage may be a virulence factor against the host innate immune response. The sequence is that of Porin AaxA (aaxA) from Chlamydia trachomatis serovar A (strain ATCC VR-571B / DSM 19440 / HAR-13).